The chain runs to 491 residues: Glucose-6-phosphate 1-dehydrogenase (491 aa).

Arginine 51 and lysine 150 together coordinate NADP(+). Substrate is bound by residues histidine 180, lysine 184, glutamate 218, and aspartate 237. The Proton acceptor role is filled by histidine 242. Lysine 341 contacts substrate.

Belongs to the glucose-6-phosphate dehydrogenase family.

The catalysed reaction is D-glucose 6-phosphate + NADP(+) = 6-phospho-D-glucono-1,5-lactone + NADPH + H(+). Its pathway is carbohydrate degradation; pentose phosphate pathway; D-ribulose 5-phosphate from D-glucose 6-phosphate (oxidative stage): step 1/3. Catalyzes the oxidation of glucose 6-phosphate to 6-phosphogluconolactone. The chain is Glucose-6-phosphate 1-dehydrogenase from Rhizobium meliloti (strain 1021) (Ensifer meliloti).